A 2236-amino-acid polypeptide reads, in one-letter code: uncharacterized protein (2236 aa).

Spectrin repeat units follow at residues 46–146 (QVYL…RQLE) and 238–335 (QKFV…TDIE). Coiled-coil stretches lie at residues 496–541 (VVEQ…TVNS) and 603–631 (DDQQ…VGRQ). Spectrin repeat units lie at residues 839–949 (YEYD…KTLK), 1048–1146 (KKLE…KRME), 1261–1361 (LGAE…VDLN), 1367–1459 (ILID…KSLA), and 1562–1667 (QKVV…NRLE). The stretch at 1835-1869 (QNSTDAEKKLSLVSERLNALKKQLDLLAEKIAVDD) forms a coiled coil. EF-hand domains are found at residues 2104–2139 (KQLH…QGYN) and 2141–2176 (SAEN…HETT). Ca(2+) contacts are provided by D2154, S2156, T2158, H2160, and D2165.

It belongs to the spectrin family.

This is an uncharacterized protein from Caenorhabditis elegans.